The sequence spans 434 residues: MQVSVEATQGLERRLTISVPAEQIEKLVKDSLQREAKRARIPGFRPGKVPVTVINKRYGAAIRQDITGEVMQRNFIEAIIAEKLNPAGAPTFVPGATDGEKFEFVATFEIYPEVELKGLDAIEVEQPKASVTDADVDSMIETLRKQHATFAAVEREAADGDKVKMNFVGSVDGVEFEGGKADDFELQLGSGRMIPGFEAGILGHKAGEEFVIDVTFPEEYHAENLKGKAAKFAITLTEVLAANLPEVNDEFAALFGISEGGLEALKTEIRKNMNRELEQALKANVKEQVINGLLANNDIELPKALIDGEVNVLRQQAMQRFGGQTANMPELPAELFTEQAARRVKIGLLLGEVIKTNELKAEDERVQALIASMASAYEDPSEVVAYYNSNKELMQNMRNVALEEQAVEALLKSAKVTEKEVAFEEFMNKATGRA.

The PPIase FKBP-type domain maps to 160 to 245 (GDKVKMNFVG…LTEVLAANLP (86 aa)).

It belongs to the FKBP-type PPIase family. Tig subfamily.

Its subcellular location is the cytoplasm. The catalysed reaction is [protein]-peptidylproline (omega=180) = [protein]-peptidylproline (omega=0). Functionally, involved in protein export. Acts as a chaperone by maintaining the newly synthesized protein in an open conformation. Functions as a peptidyl-prolyl cis-trans isomerase. This is Trigger factor from Shewanella sp. (strain MR-4).